Here is a 218-residue protein sequence, read N- to C-terminus: Adenylate kinase (218 aa).

Position 10–15 (10–15 (GAGKGT)) interacts with ATP. The segment at 30–59 (STGDMLRAAVKAGTPLGLEAKKVMDAGGLV) is NMP. AMP contacts are provided by residues Thr-31, Arg-36, 57 to 59 (GLV), 85 to 88 (GFPR), and Gln-92. The segment at 122 to 159 (GRRVHPASGRSYHVRFNPPKAEGVDDVTGEPLVQRDDD) is LID. Residues Arg-123 and 132–133 (SY) contribute to the ATP site. 2 residues coordinate AMP: Arg-156 and Arg-167. Gly-203 provides a ligand contact to ATP.

Belongs to the adenylate kinase family. In terms of assembly, monomer.

Its subcellular location is the cytoplasm. It carries out the reaction AMP + ATP = 2 ADP. The protein operates within purine metabolism; AMP biosynthesis via salvage pathway; AMP from ADP: step 1/1. Functionally, catalyzes the reversible transfer of the terminal phosphate group between ATP and AMP. Plays an important role in cellular energy homeostasis and in adenine nucleotide metabolism. The polypeptide is Adenylate kinase (Bordetella bronchiseptica (strain ATCC BAA-588 / NCTC 13252 / RB50) (Alcaligenes bronchisepticus)).